The following is a 135-amino-acid chain: Transcriptional regulator HosA (135 aa).

One can recognise an HTH marR-type domain in the interval 4–134 (RNKAFHQLRQ…FMQLVRKMMN (131 aa)). The H-T-H motif DNA-binding region spans 48–71 (QVALIEAAVSTKATLAEMLARMEN).

Involved in the temperature-dependent positive control of flagellum-driven swimming motility and cellular aggregation. Regulates fliC expression by directly interacting with fliC promoter. This Escherichia coli O127:H6 (strain E2348/69 / EPEC) protein is Transcriptional regulator HosA (hosA).